The primary structure comprises 520 residues: Probable glycerol-3-phosphate acyltransferase 3 (520 aa).

Helical transmembrane passes span 5 to 20, 64 to 84, 88 to 108, 264 to 284, and 286 to 306; these read ISIF…RFIL, YFML…LFIL, ISLM…FFGI, TLMN…AAAA, and LFVS…FSGC. Residues 334 to 339 carry the HXXXXD motif motif; it reads HRTLLD.

It belongs to the GPAT/DAPAT family. As to expression, widely expressed at low level. Expressed at higher level in seedlings and leaves.

The protein localises to the membrane. The catalysed reaction is sn-glycerol 3-phosphate + an acyl-CoA = a 1-acyl-sn-glycero-3-phosphate + CoA. It functions in the pathway phospholipid metabolism; CDP-diacylglycerol biosynthesis; CDP-diacylglycerol from sn-glycerol 3-phosphate: step 1/3. Functionally, esterifies acyl-group from acyl-ACP to the sn-1 position of glycerol-3-phosphate, an essential step in glycerolipid biosynthesis. In Arabidopsis thaliana (Mouse-ear cress), this protein is Probable glycerol-3-phosphate acyltransferase 3 (GPAT3).